Here is a 229-residue protein sequence, read N- to C-terminus: MKTPLKPKFQPAKIANAVVVGGMIAFGKTTIAESLAKHLKGSKVIYELEEQDQLADLLLAKMYERNDELLYAPLFQLYFTLNRFNKYRKECNNKTPTIFDRSIFEDWLFAKQNIHRPSIFTYYNHLWNGIVKELIFKHGIPALYVILEGDWELFEQRLFQRNRKVEIDNFAKNKDYFKNLYKIYGEFIKNVCYDFGISHCIVNANQSVESITKQVLEVLKSKNLDWEII.

22–29 (GMIAFGKT) is an ATP binding site.

This is an uncharacterized protein from Mycoplasma pneumoniae (strain ATCC 29342 / M129 / Subtype 1) (Mycoplasmoides pneumoniae).